The sequence spans 605 residues: Protein phosphatase 1D (605 aa).

Residues 1–101 (MAGLYSLGVS…CRRRSSVAFF (101 aa)) form an interaction with CHEK1 region. The PPM-type phosphatase domain maps to 8–375 (GVSVFSDQGG…DNTSAIVICI (368 aa)). A disordered region spans residues 28-90 (VVEPEPTAEE…DAGASPAPSR (63 aa)). 2 positions are modified to phosphoserine: Ser-40 and Ser-85. Positions 105, 106, 314, and 366 each coordinate Mn(2+). A disordered region spans residues 516–591 (STPGQMKAQE…RRLRGQKKIG (76 aa)). Polar residues-rich tracts occupy residues 530–544 (PPTN…SNSG) and 555–577 (LSRS…NSVK). Over residues 579–588 (TMRRRLRGQK) the composition is skewed to basic residues.

It belongs to the PP2C family. In terms of assembly, interacts with CHEK1 and CHEK2; dephosphorylates them. Interacts with MAPK14. It depends on Mg(2+) as a cofactor. Requires Mn(2+) as cofactor. In terms of tissue distribution, expressed in fetal and adult brain. Also detected in fetal liver and skeletal muscle, but not in their adult counterparts.

The protein resides in the nucleus. It localises to the cytoplasm. The protein localises to the cytosol. It catalyses the reaction O-phospho-L-seryl-[protein] + H2O = L-seryl-[protein] + phosphate. It carries out the reaction O-phospho-L-threonyl-[protein] + H2O = L-threonyl-[protein] + phosphate. In terms of biological role, involved in the negative regulation of p53 expression. Required for the relief of p53-dependent checkpoint mediated cell cycle arrest. Binds to and dephosphorylates 'Ser-15' of TP53 and 'Ser-345' of CHEK1 which contributes to the functional inactivation of these proteins. Mediates MAPK14 dephosphorylation and inactivation. Is also an important regulator of global heterochromatin silencing and critical in maintaining genome integrity. The chain is Protein phosphatase 1D (PPM1D) from Homo sapiens (Human).